The sequence spans 294 residues: N-acetylmuramic acid 6-phosphate etherase (294 aa).

One can recognise an SIS domain in the interval valine 54 to lysine 217. Glutamate 82 acts as the Proton donor in catalysis. The active site involves glutamate 113.

This sequence belongs to the GCKR-like family. MurNAc-6-P etherase subfamily. Homodimer.

The enzyme catalyses N-acetyl-D-muramate 6-phosphate + H2O = N-acetyl-D-glucosamine 6-phosphate + (R)-lactate. The protein operates within amino-sugar metabolism; N-acetylmuramate degradation. Functionally, specifically catalyzes the cleavage of the D-lactyl ether substituent of MurNAc 6-phosphate, producing GlcNAc 6-phosphate and D-lactate. This Bacillus anthracis (strain A0248) protein is N-acetylmuramic acid 6-phosphate etherase.